Here is a 281-residue protein sequence, read N- to C-terminus: 3-methyl-2-oxobutanoate hydroxymethyltransferase (281 aa).

Positions 49 and 88 each coordinate Mg(2+). 3-methyl-2-oxobutanoate-binding positions include 49 to 50 (DS), aspartate 88, and lysine 118. Glutamate 120 contacts Mg(2+). Glutamate 186 acts as the Proton acceptor in catalysis.

The protein belongs to the PanB family. In terms of assembly, homodecamer; pentamer of dimers. Requires Mg(2+) as cofactor.

The protein localises to the cytoplasm. The catalysed reaction is 3-methyl-2-oxobutanoate + (6R)-5,10-methylene-5,6,7,8-tetrahydrofolate + H2O = 2-dehydropantoate + (6S)-5,6,7,8-tetrahydrofolate. It functions in the pathway cofactor biosynthesis; (R)-pantothenate biosynthesis; (R)-pantoate from 3-methyl-2-oxobutanoate: step 1/2. Functionally, catalyzes the reversible reaction in which hydroxymethyl group from 5,10-methylenetetrahydrofolate is transferred onto alpha-ketoisovalerate to form ketopantoate. The polypeptide is 3-methyl-2-oxobutanoate hydroxymethyltransferase (Chelativorans sp. (strain BNC1)).